A 403-amino-acid polypeptide reads, in one-letter code: Tripartite motif-containing protein 59 (403 aa).

An RING-type zinc finger spans residues 10 to 60; that stretch reads CPICYSIFEDPRVLPCSHTFCRNCLENVLQASGNFYIWRPLRIPLKCPNCR. The B box-type zinc-finger motif lies at 92–134; that stretch reads PDVVTCPEHYRQPLNVYCLLDKKLVCGHCLTIGQHHGHPIDDL. Zn(2+)-binding residues include cysteine 97, histidine 100, cysteine 120, and histidine 126. Residues 163 to 246 adopt a coiled-coil conformation; that stretch reads LIEKLEEQKC…TITTSLQDES (84 aa). A helical membrane pass occupies residues 329-349; that stretch reads ILNIAIVSLISVILMLILLFN.

Belongs to the TRIM/RBCC family. Interacts with ECSIT. Moderately expressed in the spleen, brain and heart and very highly expressed in the testis.

The protein resides in the endoplasmic reticulum membrane. The catalysed reaction is S-ubiquitinyl-[E2 ubiquitin-conjugating enzyme]-L-cysteine + [acceptor protein]-L-lysine = [E2 ubiquitin-conjugating enzyme]-L-cysteine + N(6)-ubiquitinyl-[acceptor protein]-L-lysine.. It functions in the pathway protein modification; protein ubiquitination. Its function is as follows. E3 ubiquitin ligase involved in different processes such as development and immune response. Serves as a negative regulator for innate immune signaling pathways by suppressing RLR-induced activation of IRF3/7 and NF-kappa-B via interaction with adapter ECSIT. Regulates autophagy through modulating both the transcription and the ubiquitination of BECN1. On the one hand, regulates the transcription of BECN1 through negatively modulating the NF-kappa-B pathway. On the other hand, regulates TRAF6-mediated 'Lys-63'-linked ubiquitination of BECN1, thus affecting the formation of the BECN1-PIK3C3 complex. In addition, mediates 'Lys-48'-linked ubiquitination of TRAF6 and thereby promotes TRAF6 proteasomal degradation. Also acts as a critical regulator for early embryo development from blastocyst stage to gastrula through modulating F-actin assembly and WASH1 'Lys-63'-linked ubiquitination. This Mus musculus (Mouse) protein is Tripartite motif-containing protein 59 (Trim59).